A 344-amino-acid chain; its full sequence is RNA 3'-terminal phosphate cyclase (344 aa).

ATP is bound by residues glutamine 103 and 283–287; that span reads HLADQ. Histidine 308 acts as the Tele-AMP-histidine intermediate in catalysis.

Belongs to the RNA 3'-terminal cyclase family. Type 1 subfamily.

The protein resides in the cytoplasm. It carries out the reaction a 3'-end 3'-phospho-ribonucleotide-RNA + ATP = a 3'-end 2',3'-cyclophospho-ribonucleotide-RNA + AMP + diphosphate. Functionally, catalyzes the conversion of 3'-phosphate to a 2',3'-cyclic phosphodiester at the end of RNA. The mechanism of action of the enzyme occurs in 3 steps: (A) adenylation of the enzyme by ATP; (B) transfer of adenylate to an RNA-N3'P to produce RNA-N3'PP5'A; (C) and attack of the adjacent 2'-hydroxyl on the 3'-phosphorus in the diester linkage to produce the cyclic end product. The biological role of this enzyme is unknown but it is likely to function in some aspects of cellular RNA processing. This Salmonella agona (strain SL483) protein is RNA 3'-terminal phosphate cyclase.